The following is a 269-amino-acid chain: Formamidopyrimidine-DNA glycosylase (269 aa).

The active-site Schiff-base intermediate with DNA is the proline 2. The active-site Proton donor is the glutamate 3. The active-site Proton donor; for beta-elimination activity is the lysine 57. Residues histidine 90, arginine 109, and lysine 150 each coordinate DNA. The FPG-type zinc finger occupies 235-269 (QVYGKAGESCPECGEAIQELKIGQRNTFYCSYCQC). Catalysis depends on arginine 259, which acts as the Proton donor; for delta-elimination activity.

This sequence belongs to the FPG family. In terms of assembly, monomer. It depends on Zn(2+) as a cofactor.

The enzyme catalyses Hydrolysis of DNA containing ring-opened 7-methylguanine residues, releasing 2,6-diamino-4-hydroxy-5-(N-methyl)formamidopyrimidine.. It carries out the reaction 2'-deoxyribonucleotide-(2'-deoxyribose 5'-phosphate)-2'-deoxyribonucleotide-DNA = a 3'-end 2'-deoxyribonucleotide-(2,3-dehydro-2,3-deoxyribose 5'-phosphate)-DNA + a 5'-end 5'-phospho-2'-deoxyribonucleoside-DNA + H(+). Functionally, involved in base excision repair of DNA damaged by oxidation or by mutagenic agents. Acts as a DNA glycosylase that recognizes and removes damaged bases. Has a preference for oxidized purines, such as 7,8-dihydro-8-oxoguanine (8-oxoG). Has AP (apurinic/apyrimidinic) lyase activity and introduces nicks in the DNA strand. Cleaves the DNA backbone by beta-delta elimination to generate a single-strand break at the site of the removed base with both 3'- and 5'-phosphates. This is Formamidopyrimidine-DNA glycosylase from Vibrio vulnificus (strain YJ016).